A 151-amino-acid polypeptide reads, in one-letter code: uncharacterized protein (151 aa).

3 consecutive 4Fe-4S ferredoxin-type domains span residues 4–32 (KIIV…ESRV), 33–63 (RKVD…YLKD), and 64–93 (GIPI…IKNR). 16 residues coordinate [4Fe-4S] cluster: Cys13, Cys16, Cys19, Cys23, Cys42, Cys45, Cys50, Cys54, Cys73, Cys76, Cys79, Cys83, Cys98, Cys101, Cys111, and Cys115.

Requires [4Fe-4S] cluster as cofactor.

This is an uncharacterized protein from Methanocaldococcus jannaschii (strain ATCC 43067 / DSM 2661 / JAL-1 / JCM 10045 / NBRC 100440) (Methanococcus jannaschii).